Here is a 204-residue protein sequence, read N- to C-terminus: Guanine-specific ADP-ribosyl transferase (204 aa).

The N-terminal stretch at 1 to 42 (MITTSLRRRTAAAVLSLSAVLATTAATAPGAAPAPSAAPAKA) is a signal peptide. C46 and C76 are oxidised to a cystine. Residues 81–85 (RSDSR) and K98 contribute to the NADH site. GDP contacts are provided by residues 111 to 114 (VLVN), 132 to 134 (WYK), W159, and Q162. The PN (phosphate-nicotinamide) loop signature appears at 132 to 136 (WYKSG). A disulfide bridge connects residues C180 and C194.

Belongs to the pierisin ADP-ribosyltransferase family. Monomer.

It localises to the secreted. The enzyme catalyses guanosine + NAD(+) = N(2)-(ADP-D-ribosyl)-guanosine + nicotinamide + H(+). It catalyses the reaction a 2'-deoxyguanosine in DNA + NAD(+) = an N(2)-(ADP-L-ribosyl)-2'-deoxyguanosine in DNA + nicotinamide + H(+). It carries out the reaction 2'-deoxyguanosine + NAD(+) = N(2)-(ADP-D-ribosyl)-2'-deoxyguanosine + nicotinamide + H(+). The catalysed reaction is GMP + NAD(+) = N(2)-(ADP-D-ribosyl)-GMP + nicotinamide + H(+). The enzyme catalyses GTP + NAD(+) = N(2)-(ADP-D-ribosyl)-GTP + nicotinamide + H(+). It catalyses the reaction dGMP + NAD(+) = N(2)-(ADP-D-ribosyl)-dGMP + nicotinamide + H(+). It carries out the reaction dGTP + NAD(+) = N(2)-(ADP-D-ribosyl)-dGTP + nicotinamide + H(+). The catalysed reaction is 3',5'-cyclic GMP + NAD(+) = N(2)-(ADP-D-ribosyl)-3',5'-cyclic GMP + nicotinamide + H(+). The enzyme catalyses guanine + NAD(+) = N(2)-(ADP-D-ribosyl)-guanine + nicotinamide + H(+). It catalyses the reaction GDP + NAD(+) = N(2)-(ADP-D-ribosyl)-GDP + nicotinamide + H(+). Its activity is regulated as follows. Inhibited by NADH. Functionally, ADP-ribosylates the N2 amino group of guanosine, deoxyguanosine, GMP, dGMP, cGMP, GTP and dGTP; oligo-guanosine, oligo-deoxyguanosine and tRNA are ADP-ribosylated less efficiently, while dsDNA is a very poor substrate. Also acts on GDP. This is Guanine-specific ADP-ribosyl transferase from Streptomyces coelicolor (strain ATCC BAA-471 / A3(2) / M145).